Reading from the N-terminus, the 506-residue chain is Protein EFFECTOR OF TRANSCRIPTION 1 (506 aa).

The GIY-YIG domain occupies 185 to 225; it reads AFQGLYELSHDHGRKDDVLVANLGQPESIRSRLRSYSRSFA. The segment covering 234–247 has biased composition (polar residues); that stretch reads LSQTILPTTQNKSD. Positions 234-298 are disordered; that stretch reads LSQTILPTTQ…VSEKHDDIVD (65 aa). Over residues 248 to 272 the composition is skewed to basic and acidic residues; the sequence is NQTEEKKSDSEEEREVSSDAAEKES. Over residues 273–288 the composition is skewed to low complexity; sequence NSLPSILRLSRSRPQP. Cx9Cx9RCx2HK repeat units follow at residues 306–331 and 361–386; these read CGVL…TEHK and CGVI…EDHK. Over residues 404–413 the composition is skewed to basic and acidic residues; the sequence is KAVNEDKSKP. The disordered stretch occupies residues 404-426; sequence KAVNEDKSKPETSTGMNQEGSGL. Positions 414–423 are enriched in polar residues; the sequence is ETSTGMNQEG. Cx9Cx9RCx2HK repeat units lie at residues 428 to 453 and 475 to 500; these read CEAT…WQHK and CGFK…EEHK.

In terms of tissue distribution, expressed in rosette leaves, stipules, stems, flowers, siliques and mature seeds. Expressed in the vascular bundles of xylem in shoot parenchyma cells. Expressed in the remnant cytoplasm of differentiated fiber cells and in protoxylem element of parenchymal cells.

Its subcellular location is the cytoplasm. It localises to the nucleus. Functionally, transcriptional regulator involved in the regulation of cell differentiation in meristems. Binds DNA without sequence preference. This Arabidopsis thaliana (Mouse-ear cress) protein is Protein EFFECTOR OF TRANSCRIPTION 1.